Reading from the N-terminus, the 251-residue chain is Aspartate/glutamate leucyltransferase (251 aa).

This sequence belongs to the R-transferase family. Bpt subfamily.

The protein resides in the cytoplasm. It catalyses the reaction N-terminal L-glutamyl-[protein] + L-leucyl-tRNA(Leu) = N-terminal L-leucyl-L-glutamyl-[protein] + tRNA(Leu) + H(+). The catalysed reaction is N-terminal L-aspartyl-[protein] + L-leucyl-tRNA(Leu) = N-terminal L-leucyl-L-aspartyl-[protein] + tRNA(Leu) + H(+). Functions in the N-end rule pathway of protein degradation where it conjugates Leu from its aminoacyl-tRNA to the N-termini of proteins containing an N-terminal aspartate or glutamate. This chain is Aspartate/glutamate leucyltransferase, found in Stenotrophomonas maltophilia (strain R551-3).